Here is a 204-residue protein sequence, read N- to C-terminus: General stress protein Ctc (204 aa).

The interval 177–204 (ILPPQQQEAAEVDEEESADAQPEGENEQ) is disordered. Residues 186-204 (AEVDEEESADAQPEGENEQ) are compositionally biased toward acidic residues.

This sequence belongs to the bacterial ribosomal protein bL25 family. CTC subfamily. As to quaternary structure, part of the ribosome (presumably the 50S subunit) under heat-stress but not control growth conditions. Binds 5S rRNA.

Its function is as follows. Not required for exponential growth; probably functions in vegetatively growing cells, maybe required for accurate translation under stress conditions. The chain is General stress protein Ctc from Bacillus subtilis (strain 168).